Here is a 449-residue protein sequence, read N- to C-terminus: Gamma-aminobutyric acid receptor subunit delta (449 aa).

The first 24 residues, 1–24 (MDVLGWLLLPLLLLCTQPHHGARA), serve as a signal peptide directing secretion. At 25-251 (MNDIGDYVGS…QLRRNRGVYI (227 aa)) the chain is on the extracellular side. Asn103 and Asn106 each carry an N-linked (GlcNAc...) asparagine glycan. Cys164 and Cys178 form a disulfide bridge. A helical transmembrane segment spans residues 252–271 (IQSYMPSVLLVAMSWVSFWI). The Cytoplasmic portion of the chain corresponds to 272-275 (SQAA). A helical membrane pass occupies residues 276–298 (VPARVSLGITTVLTMTTLMVSAR). At 299–308 (SSLPRASAIK) the chain is on the extracellular side. A helical transmembrane segment spans residues 309–331 (ALDVYFWICYVFVFAALVEYAFA). The Cytoplasmic portion of the chain corresponds to 332–423 (HFNADYRKKR…SRLKPIDADT (92 aa)). Ser390 carries the phosphoserine modification. The helical transmembrane segment at 424 to 446 (IDIYARAVFPAAFAAVNIIYWAA) threads the bilayer. Residues 447–449 (YTM) lie on the Extracellular side of the membrane.

Belongs to the ligand-gated ion channel (TC 1.A.9) family. Gamma-aminobutyric acid receptor (TC 1.A.9.5) subfamily. GABRD sub-subfamily. In terms of assembly, heteropentamer, formed by a combination of alpha (GABRA1-6), beta (GABRB1-3), gamma (GABRG1-3), delta (GABRD), epsilon (GABRE), rho (GABRR1-3), pi (GABRP) and theta (GABRQ) chains, each subunit exhibiting distinct physiological and pharmacological properties.

It is found in the cell membrane. It carries out the reaction chloride(in) = chloride(out). Functionally, delta subunit of the heteropentameric ligand-gated chloride channel gated by gamma-aminobutyric acid (GABA), a major inhibitory neurotransmitter in the brain. GABA-gated chloride channels, also named GABA(A) receptors (GABAAR), consist of five subunits arranged around a central pore and contain GABA active binding site(s) located at the alpha and beta subunit interface(s). When activated by GABA, GABAARs selectively allow the flow of chloride anions across the cell membrane down their electrochemical gradient. GABAARs containing delta/GABRD subunits are predominantly expressed and located in extrasynaptic or perisynaptic positions on hippocampus and cerebellar granule cells, and contribute to the tonic GABAergic inhibition. GABAAR containing alpha-4-beta-3-delta subunits can simultaneously bind GABA and histamine where histamine binds at the interface of two neighboring beta subunits, which may be involved in the regulation of sleep and wakefulness. This Mus musculus (Mouse) protein is Gamma-aminobutyric acid receptor subunit delta.